The chain runs to 56 residues: MAVQQNRKTRSKRGMRRSHDALSAPTLSQDKETGTTHRRHHVAPDGFYRGRKVVDV.

The interval 1 to 56 is disordered; the sequence is MAVQQNRKTRSKRGMRRSHDALSAPTLSQDKETGTTHRRHHVAPDGFYRGRKVVDV. The segment covering 7 to 16 has biased composition (basic residues); it reads RKTRSKRGMR.

This sequence belongs to the bacterial ribosomal protein bL32 family.

The chain is Large ribosomal subunit protein bL32 from Chromohalobacter salexigens (strain ATCC BAA-138 / DSM 3043 / CIP 106854 / NCIMB 13768 / 1H11).